A 215-amino-acid polypeptide reads, in one-letter code: Fibroblast growth factor 10 (215 aa).

The first 36 residues, 1–36 (MWKWILTHCASAFPHLPGCCCCFLLLFLVSSVPVTC), serve as a signal peptide directing secretion. The interval 49-73 (TNSSSSSSSSSSSSSFSSPSSAGRH) is disordered. N-linked (GlcNAc...) asparagine glycosylation is present at Asn50. Positions 51–69 (SSSSSSSSSSSSSFSSPSS) are enriched in low complexity. Asn203 carries N-linked (GlcNAc...) asparagine glycosylation.

It belongs to the heparin-binding growth factors family. As to quaternary structure, interacts with FGFR1 and FGFR2. Interacts with FGFBP1. Preferentially expressed in the lung in adults.

The protein localises to the secreted. Functionally, plays an important role in the regulation of embryonic development, cell proliferation and cell differentiation. Required for normal branching morphogenesis. May play a role in wound healing. This chain is Fibroblast growth factor 10 (Fgf10), found in Rattus norvegicus (Rat).